Reading from the N-terminus, the 163-residue chain is uncharacterized protein (163 aa).

Positions 1 to 54 (MGKSARLRRSQTSSPENVLLGKDSSDDPYRSDSETESNSSSGTESNMSSDSTTS) are disordered. Residues 23–33 (DSSDDPYRSDS) show a composition bias toward basic and acidic residues. Residues 36-52 (ESNSSSGTESNMSSDST) show a composition bias toward low complexity. Residues 69-143 (LRTELAEMEM…VEELESSTRE (75 aa)) are a coiled coil.

This is an uncharacterized protein from Arabidopsis thaliana (Mouse-ear cress).